The chain runs to 128 residues: Small ribosomal subunit protein bS16 (128 aa).

A disordered region spans residues 107–128 (AAEAKAAAANESDDSGTDSTES). Residues 117–128 (ESDDSGTDSTES) are compositionally biased toward acidic residues.

This sequence belongs to the bacterial ribosomal protein bS16 family.

In Synechococcus sp. (strain CC9311), this protein is Small ribosomal subunit protein bS16.